A 155-amino-acid polypeptide reads, in one-letter code: Transcriptional repressor NrdR (155 aa).

Residues 3 to 34 fold into a zinc finger; that stretch reads CPNCHQNASRVIDSRPTDEGRTIRRRRECENC. The region spanning 49–139 is the ATP-cone domain; sequence LLVIKNDGTR…IYRQFTDMSS (91 aa).

It belongs to the NrdR family. Requires Zn(2+) as cofactor.

Functionally, negatively regulates transcription of bacterial ribonucleotide reductase nrd genes and operons by binding to NrdR-boxes. This is Transcriptional repressor NrdR from Lactobacillus delbrueckii subsp. bulgaricus (strain ATCC 11842 / DSM 20081 / BCRC 10696 / JCM 1002 / NBRC 13953 / NCIMB 11778 / NCTC 12712 / WDCM 00102 / Lb 14).